The sequence spans 73 residues: Conotoxin Lt9a (73 aa).

A signal peptide spans 1 to 23; sequence MTLTKSAVLILVLLLAFDNFADV. Residues 24–40 constitute a propeptide that is removed on maturation; it reads QPGLITMGGGRLSNLLS. 3 disulfides stabilise this stretch: cysteine 48–cysteine 62, cysteine 53–cysteine 64, and cysteine 59–cysteine 69.

It belongs to the conotoxin P superfamily. As to expression, expressed by the venom duct.

It is found in the secreted. In terms of biological role, probable neurotoxin that inhibits ion channels. The protein is Conotoxin Lt9a of Conus litteratus (Lettered cone).